The chain runs to 688 residues: Glycine--tRNA ligase beta subunit (688 aa).

The protein belongs to the class-II aminoacyl-tRNA synthetase family. In terms of assembly, tetramer of two alpha and two beta subunits.

It localises to the cytoplasm. The catalysed reaction is tRNA(Gly) + glycine + ATP = glycyl-tRNA(Gly) + AMP + diphosphate. The chain is Glycine--tRNA ligase beta subunit from Listeria monocytogenes serovar 1/2a (strain ATCC BAA-679 / EGD-e).